The primary structure comprises 187 residues: Ribosome maturation factor RimM (187 aa).

The region spanning 96 to 169 (EDEFFYADLE…KLVIDPTAAG (74 aa)) is the PRC barrel domain.

It belongs to the RimM family. Binds ribosomal protein uS19.

Its subcellular location is the cytoplasm. In terms of biological role, an accessory protein needed during the final step in the assembly of 30S ribosomal subunit, possibly for assembly of the head region. Essential for efficient processing of 16S rRNA. May be needed both before and after RbfA during the maturation of 16S rRNA. It has affinity for free ribosomal 30S subunits but not for 70S ribosomes. This chain is Ribosome maturation factor RimM, found in Sinorhizobium medicae (strain WSM419) (Ensifer medicae).